A 324-amino-acid polypeptide reads, in one-letter code: tRNA dimethylallyltransferase (324 aa).

18–25 (GPTAVGKT) serves as a coordination point for ATP. Residue 20–25 (TAVGKT) participates in substrate binding. The tract at residues 43 to 46 (DSRQ) is interaction with substrate tRNA.

Belongs to the IPP transferase family. Monomer. Mg(2+) serves as cofactor.

It catalyses the reaction adenosine(37) in tRNA + dimethylallyl diphosphate = N(6)-dimethylallyladenosine(37) in tRNA + diphosphate. In terms of biological role, catalyzes the transfer of a dimethylallyl group onto the adenine at position 37 in tRNAs that read codons beginning with uridine, leading to the formation of N6-(dimethylallyl)adenosine (i(6)A). In Salinibacter ruber (strain DSM 13855 / M31), this protein is tRNA dimethylallyltransferase.